We begin with the raw amino-acid sequence, 577 residues long: Arginine--tRNA ligase (577 aa).

The 'HIGH' region signature appears at 122–132; that stretch reads PNVAKEMHVGH.

The protein belongs to the class-I aminoacyl-tRNA synthetase family. In terms of assembly, monomer.

The protein resides in the cytoplasm. The catalysed reaction is tRNA(Arg) + L-arginine + ATP = L-arginyl-tRNA(Arg) + AMP + diphosphate. This is Arginine--tRNA ligase from Vibrio vulnificus (strain YJ016).